Consider the following 425-residue polypeptide: Probable mitochondrial import inner membrane translocase subunit tin-44 (425 aa).

The stretch at 38 to 149 forms a coiled coil; the sequence is FLNNLIDNVR…EHVEKVAEKV (112 aa).

It belongs to the Tim44 family. Probable component of the PAM complex at least composed of a mitochondrial HSP70 protein, GrpE, tin-44, tim-16 and tim-14/dnj-21. The complex interacts with the tim-23 component of the TIM23 complex.

The protein localises to the mitochondrion inner membrane. Essential component of the PAM complex, a complex required for the translocation of transit peptide-containing proteins from the inner membrane into the mitochondrial matrix in an ATP-dependent manner. Recruits mitochondrial HSP70 to drive protein translocation into the matrix using ATP as an energy source. This Caenorhabditis elegans protein is Probable mitochondrial import inner membrane translocase subunit tin-44.